A 412-amino-acid polypeptide reads, in one-letter code: Lipoyl synthase, mitochondrial (412 aa).

Positions 127, 132, 138, 159, 163, 166, and 375 each coordinate [4Fe-4S] cluster. The 223-residue stretch at 142-364 (SDDEGTATAT…EKEAMDMGFL (223 aa)) folds into the Radical SAM core domain.

This sequence belongs to the radical SAM superfamily. Lipoyl synthase family. [4Fe-4S] cluster serves as cofactor.

Its subcellular location is the mitochondrion. The catalysed reaction is [[Fe-S] cluster scaffold protein carrying a second [4Fe-4S](2+) cluster] + N(6)-octanoyl-L-lysyl-[protein] + 2 oxidized [2Fe-2S]-[ferredoxin] + 2 S-adenosyl-L-methionine + 4 H(+) = [[Fe-S] cluster scaffold protein] + N(6)-[(R)-dihydrolipoyl]-L-lysyl-[protein] + 4 Fe(3+) + 2 hydrogen sulfide + 2 5'-deoxyadenosine + 2 L-methionine + 2 reduced [2Fe-2S]-[ferredoxin]. It participates in protein modification; protein lipoylation via endogenous pathway; protein N(6)-(lipoyl)lysine from octanoyl-[acyl-carrier-protein]: step 2/2. Functionally, catalyzes the radical-mediated insertion of two sulfur atoms into the C-6 and C-8 positions of the octanoyl moiety bound to the lipoyl domains of lipoate-dependent enzymes, thereby converting the octanoylated domains into lipoylated derivatives. This Leishmania infantum protein is Lipoyl synthase, mitochondrial.